The primary structure comprises 420 residues: Cytochrome P-450 monooxygenase DoxA (420 aa).

C367 contacts heme.

This sequence belongs to the cytochrome P450 family. In terms of assembly, monomer. Heme is required as a cofactor.

The protein localises to the cytoplasm. It catalyses the reaction 13-deoxydaunorubicin + NADPH + O2 + H(+) = 13-dihydrodaunorubicin + NADP(+) + H2O. The catalysed reaction is 13-dihydrodaunorubicin + NADPH + O2 + H(+) = daunorubicin + NADP(+) + 2 H2O. The enzyme catalyses 13-deoxycarminomycin + NADPH + O2 + H(+) = 13-dihydrocarminomycin + NADP(+) + H2O. It carries out the reaction 13-dihydrocarminomycin + NADPH + O2 + H(+) = carminomycin + NADP(+) + 2 H2O. It catalyses the reaction daunorubicin + NADPH + O2 + H(+) = doxorubicin + NADP(+) + H2O. It participates in antibiotic biosynthesis; daunorubicin biosynthesis. Its pathway is antibiotic biosynthesis; carminomycin biosynthesis. It functions in the pathway antibiotic biosynthesis; doxorubicin biosynthesis. Involved in the biosynthesis of the anthracyclines carminomycin, daunorubicin (daunomycin) and doxorubicin (adriamycin) which are aromatic polyketide antibiotics that exhibit high cytotoxicity and are widely applied in the chemotherapy of a variety of cancers. In vivo, DoxA catalyzes the C-13 hydroxylation of 13-deoxycarminomycin and 13-deoxydaunorubicin to yield 13-dihydrocarminomycin and 13-dihydrodaunorubicin, respectively, as well as the oxidation of these 13-dihydro-anthracyclines to their respective 13-keto forms, carminomycin and daunorubicin. In vivo, it also catalyzes the C-14 hydroxylation of daunorubicin to form doxorubicin. It can only use NADP. DoxA acts jointly with DnrV. This is Cytochrome P-450 monooxygenase DoxA (doxA) from Streptomyces peucetius subsp. caesius.